Consider the following 293-residue polypeptide: uncharacterized protein (293 aa).

Disordered stretches follow at residues 1-95 (MFLR…KDKA) and 268-293 (EETA…GRAL). Phosphoserine occurs at positions 34, 35, and 89. 2 stretches are compositionally biased toward basic and acidic residues: residues 85–95 (KRMDSLKKDKA) and 277–286 (GQGKEAKEQT).

This is an uncharacterized protein from Rattus norvegicus (Rat).